Consider the following 120-residue polypeptide: Anti-adapter protein IraM (120 aa).

Belongs to the IraM/RssC family.

The protein resides in the cytoplasm. Its function is as follows. Involved in the stabilization of the sigma stress factor RpoS. The polypeptide is Anti-adapter protein IraM (Salmonella choleraesuis (strain SC-B67)).